The chain runs to 188 residues: Elongation factor P (188 aa).

Lysine 34 is modified (N6-(3,6-diaminohexanoyl)-5-hydroxylysine).

This sequence belongs to the elongation factor P family. In terms of processing, may be beta-lysylated on the epsilon-amino group of Lys-34 by the combined action of EpmA and EpmB, and then hydroxylated on the C5 position of the same residue by EpmC (if this protein is present). Lysylation is critical for the stimulatory effect of EF-P on peptide-bond formation. The lysylation moiety may extend toward the peptidyltransferase center and stabilize the terminal 3-CCA end of the tRNA. Hydroxylation of the C5 position on Lys-34 may allow additional potential stabilizing hydrogen-bond interactions with the P-tRNA.

The protein localises to the cytoplasm. Its pathway is protein biosynthesis; polypeptide chain elongation. In terms of biological role, involved in peptide bond synthesis. Alleviates ribosome stalling that occurs when 3 or more consecutive Pro residues or the sequence PPG is present in a protein, possibly by augmenting the peptidyl transferase activity of the ribosome. Modification of Lys-34 is required for alleviation. The chain is Elongation factor P from Stenotrophomonas maltophilia (strain R551-3).